The chain runs to 166 residues: ATP synthase subunit b (166 aa).

The chain crosses the membrane as a helical span at residues 15 to 37 (TLYYLLIFAALLLLVKHFAWGPV).

This sequence belongs to the ATPase B chain family. As to quaternary structure, F-type ATPases have 2 components, F(1) - the catalytic core - and F(0) - the membrane proton channel. F(1) has five subunits: alpha(3), beta(3), gamma(1), delta(1), epsilon(1). F(0) has three main subunits: a(1), b(2) and c(10-14). The alpha and beta chains form an alternating ring which encloses part of the gamma chain. F(1) is attached to F(0) by a central stalk formed by the gamma and epsilon chains, while a peripheral stalk is formed by the delta and b chains.

The protein localises to the cell membrane. Functionally, f(1)F(0) ATP synthase produces ATP from ADP in the presence of a proton or sodium gradient. F-type ATPases consist of two structural domains, F(1) containing the extramembraneous catalytic core and F(0) containing the membrane proton channel, linked together by a central stalk and a peripheral stalk. During catalysis, ATP synthesis in the catalytic domain of F(1) is coupled via a rotary mechanism of the central stalk subunits to proton translocation. Component of the F(0) channel, it forms part of the peripheral stalk, linking F(1) to F(0). This chain is ATP synthase subunit b, found in Lactobacillus gasseri (strain ATCC 33323 / DSM 20243 / BCRC 14619 / CIP 102991 / JCM 1131 / KCTC 3163 / NCIMB 11718 / NCTC 13722 / AM63).